The chain runs to 236 residues: uncharacterized protein (236 aa).

This is an uncharacterized protein from Saccharolobus islandicus (Sulfolobus islandicus).